The chain runs to 416 residues: Putative nucleoside permease NupX (416 aa).

Topologically, residues 1 to 2 (MD) are periplasmic. The helical transmembrane segment at 3–23 (VMRSVLGMVVLLTIAFLLSVN) threads the bilayer. Residues 24–31 (KKKISLRT) lie on the Cytoplasmic side of the membrane. Residues 32–52 (VGAALVLQVVIGGIMLWLPPG) traverse the membrane as a helical segment. Residues 53–95 (RWVAEKVAFGVHKVMAYSDAGSAFIFGSLVGPKMDTLFDGAGF) lie on the Periplasmic side of the membrane. The helical transmembrane segment at 96-118 (IFGFRVLPAIIFVTALVSILYYI) threads the bilayer. Topologically, residues 119–172 (GVMGILIRILGGIFQKALNISKIESFVAVTTIFLGQNEIPAIVKPFIDRLNRNE) are cytoplasmic. A helical transmembrane segment spans residues 173–193 (LFTAICSGMASIAGSTMIGYA). At 194 to 196 (ALG) the chain is on the periplasmic side. The chain crosses the membrane as a helical span at residues 197-217 (VPVEYLLAASLMAIPGGILFA). Topologically, residues 218–246 (RLLSPATESSQVSFNNLSFTETPPKSIIE) are cytoplasmic. The helical transmembrane segment at 247-267 (AAATGAMTGLKIAAGVATVVM) threads the bilayer. Topologically, residues 268 to 352 (AFVAIIALIN…QTAGTLDAKT (85 aa)) are periplasmic. The chain crosses the membrane as a helical span at residues 353–373 (VAIISFALCGFANFGSIGVVV). Residues 374–394 (GAFSAVAPHRAPEIAQLGLRA) lie on the Cytoplasmic side of the membrane. A helical membrane pass occupies residues 395 to 415 (LAAATLSNLMSATIAGFFIGL). Residue Ala416 is a topological domain, periplasmic.

It belongs to the concentrative nucleoside transporter (CNT) (TC 2.A.41) family.

It localises to the cell inner membrane. This Escherichia coli (strain K12) protein is Putative nucleoside permease NupX (nupX).